We begin with the raw amino-acid sequence, 194 residues long: Probable nicotinate-nucleotide adenylyltransferase (194 aa).

The protein belongs to the NadD family.

It carries out the reaction nicotinate beta-D-ribonucleotide + ATP + H(+) = deamido-NAD(+) + diphosphate. It functions in the pathway cofactor biosynthesis; NAD(+) biosynthesis; deamido-NAD(+) from nicotinate D-ribonucleotide: step 1/1. In terms of biological role, catalyzes the reversible adenylation of nicotinate mononucleotide (NaMN) to nicotinic acid adenine dinucleotide (NaAD). In Brucella suis biovar 1 (strain 1330), this protein is Probable nicotinate-nucleotide adenylyltransferase.